The following is a 157-amino-acid chain: UPF0251 protein CLK_0815 (157 aa).

This sequence belongs to the UPF0251 family.

The chain is UPF0251 protein CLK_0815 from Clostridium botulinum (strain Loch Maree / Type A3).